We begin with the raw amino-acid sequence, 463 residues long: tRNA-2-methylthio-N(6)-dimethylallyladenosine synthase (463 aa).

Residues 19-135 (RSYWITTFGC…LENLLGKVDL (117 aa)) enclose the MTTase N-terminal domain. Residues Cys-28, Cys-64, Cys-98, Cys-170, Cys-174, and Cys-177 each contribute to the [4Fe-4S] cluster site. In terms of domain architecture, Radical SAM core spans 156-393 (RESSICGWVN…NALVEKTARN (238 aa)). The TRAM domain occupies 396 to 463 (QRYINNIESV…RPFSLTGELC (68 aa)).

This sequence belongs to the methylthiotransferase family. MiaB subfamily. Monomer. It depends on [4Fe-4S] cluster as a cofactor.

The protein resides in the cytoplasm. It carries out the reaction N(6)-dimethylallyladenosine(37) in tRNA + (sulfur carrier)-SH + AH2 + 2 S-adenosyl-L-methionine = 2-methylsulfanyl-N(6)-dimethylallyladenosine(37) in tRNA + (sulfur carrier)-H + 5'-deoxyadenosine + L-methionine + A + S-adenosyl-L-homocysteine + 2 H(+). Its function is as follows. Catalyzes the methylthiolation of N6-(dimethylallyl)adenosine (i(6)A), leading to the formation of 2-methylthio-N6-(dimethylallyl)adenosine (ms(2)i(6)A) at position 37 in tRNAs that read codons beginning with uridine. The chain is tRNA-2-methylthio-N(6)-dimethylallyladenosine synthase from Prochlorococcus marinus (strain MIT 9312).